The chain runs to 265 residues: 4-hydroxy-tetrahydrodipicolinate reductase (265 aa).

Residues 9 to 14 (GALGRM), 100 to 102 (GTT), and 124 to 127 (SPNM) contribute to the NAD(+) site. The active-site Proton donor/acceptor is the histidine 158. (S)-2,3,4,5-tetrahydrodipicolinate is bound at residue histidine 159. Catalysis depends on lysine 162, which acts as the Proton donor. Residue 168 to 169 (GT) participates in (S)-2,3,4,5-tetrahydrodipicolinate binding.

Belongs to the DapB family.

The protein localises to the cytoplasm. The catalysed reaction is (S)-2,3,4,5-tetrahydrodipicolinate + NAD(+) + H2O = (2S,4S)-4-hydroxy-2,3,4,5-tetrahydrodipicolinate + NADH + H(+). It catalyses the reaction (S)-2,3,4,5-tetrahydrodipicolinate + NADP(+) + H2O = (2S,4S)-4-hydroxy-2,3,4,5-tetrahydrodipicolinate + NADPH + H(+). Its pathway is amino-acid biosynthesis; L-lysine biosynthesis via DAP pathway; (S)-tetrahydrodipicolinate from L-aspartate: step 4/4. In terms of biological role, catalyzes the conversion of 4-hydroxy-tetrahydrodipicolinate (HTPA) to tetrahydrodipicolinate. The chain is 4-hydroxy-tetrahydrodipicolinate reductase from Aquifex aeolicus (strain VF5).